The following is a 247-amino-acid chain: Adenylyl-sulfate kinase (247 aa).

Positions 1 to 24 (MSQSNSDDSASSSTQQAGDGQDDV) are disordered. 55 to 62 (GLSGCGKS) provides a ligand contact to ATP. Catalysis depends on Ser146, which acts as the Phosphoserine intermediate.

This sequence belongs to the APS kinase family.

The catalysed reaction is adenosine 5'-phosphosulfate + ATP = 3'-phosphoadenylyl sulfate + ADP + H(+). The protein operates within sulfur metabolism; hydrogen sulfide biosynthesis; sulfite from sulfate: step 2/3. Functionally, catalyzes the synthesis of activated sulfate. This chain is Adenylyl-sulfate kinase, found in Rhodopirellula baltica (strain DSM 10527 / NCIMB 13988 / SH1).